The primary structure comprises 585 residues: Glutamate decarboxylase (585 aa).

Polar residues predominate over residues 35 to 56 (KSAVQSGHQGSNNMRDTSSQGM). The tract at residues 35-60 (KSAVQSGHQGSNNMRDTSSQGMANKY) is disordered. The residue at position 318 (lysine 318) is an N6-(pyridoxal phosphate)lysine.

Belongs to the group II decarboxylase family. Pyridoxal 5'-phosphate serves as cofactor.

The catalysed reaction is L-glutamate + H(+) = 4-aminobutanoate + CO2. The polypeptide is Glutamate decarboxylase (GAD1) (Saccharomyces cerevisiae (strain ATCC 204508 / S288c) (Baker's yeast)).